Here is a 140-residue protein sequence, read N- to C-terminus: MNIYLISKVFIKYHLFQNILKSYLLNFLVRLMALGLDRNMEGVLCYLLFWISGLIFLLLEREDDFIRFHAMQSFITFLSLNLIAIIVSAIPIIGWVASTLINIAIIILWIVGMIKAYNGERYKFPVFGDIAERYYREFLK.

3 consecutive transmembrane segments (helical) span residues 40–60, 70–90, and 92–112; these read MEGV…LLLE, AMQS…VSAI, and IIGW…WIVG.

It belongs to the UPF0132 family.

The protein localises to the cell membrane. The protein is UPF0132 membrane protein MJ1527 of Methanocaldococcus jannaschii (strain ATCC 43067 / DSM 2661 / JAL-1 / JCM 10045 / NBRC 100440) (Methanococcus jannaschii).